The chain runs to 670 residues: DNA ligase (670 aa).

NAD(+)-binding positions include D32–D36, S81–L82, and E113. K115 functions as the N6-AMP-lysine intermediate in the catalytic mechanism. The NAD(+) site is built by R136, E173, K290, and K314. C408, C411, C426, and C432 together coordinate Zn(2+). The BRCT domain maps to E592–E670.

It belongs to the NAD-dependent DNA ligase family. LigA subfamily. Requires Mg(2+) as cofactor. The cofactor is Mn(2+).

The enzyme catalyses NAD(+) + (deoxyribonucleotide)n-3'-hydroxyl + 5'-phospho-(deoxyribonucleotide)m = (deoxyribonucleotide)n+m + AMP + beta-nicotinamide D-nucleotide.. DNA ligase that catalyzes the formation of phosphodiester linkages between 5'-phosphoryl and 3'-hydroxyl groups in double-stranded DNA using NAD as a coenzyme and as the energy source for the reaction. It is essential for DNA replication and repair of damaged DNA. The chain is DNA ligase from Yersinia pestis bv. Antiqua (strain Antiqua).